The following is a 533-amino-acid chain: Cytochrome P450 monooxygenase calL (533 aa).

A helical membrane pass occupies residues 8–28 (TQLALLVWGIAVCVTLAIVVP). Residue Asn33 is glycosylated (N-linked (GlcNAc...) asparagine). Positions 123–148 (GKFKQDQSGRSKNPVPGHDVKPGQPR) are disordered. Residue Asn388 is glycosylated (N-linked (GlcNAc...) asparagine). Residue Cys467 participates in heme binding.

It belongs to the cytochrome P450 family. Heme serves as cofactor.

It localises to the membrane. Its pathway is secondary metabolite biosynthesis. Its function is as follows. Cytochrome P450 monooxygenase; part of the gene cluster that mediates the biosynthesis of calbistrin A and related compounds. Calbistrin A is a secondary metabolite with an interesting structure that was recently found to have bioactivity against leukemia cells. It consists of two polyketides linked by an ester bond: a bicyclic decalin containing polyketide and a linear 12 carbon dioic acid structure. The polyketide synthase calA is probably responsible for forming the decalin moiety. Because calA lacks a designated enoylreductase (ER) domain, the required activity is provided by the trans-enoyl reductase calK. Following release from the PKS, calF then probably catalyzes the oxidation and the subsequent Diels Alder cycloisomerization that lead to the formation of the decalin moiety. The decalin polyketide backbone includes two C-methyl groups, at C7 and C11 in backbone, of which the C7 position is probably methylated by the methyltransferase domain of calA. A candidate for adding the methyl group at C11, if not done by CalA, is the cluster methyltransferase calH. Several additional tailoring enzymes within the cluster could be involved in the modification of the decalin polyketide product. Those include the 3 cytochrome P450 monooxygenases CalE, CalG and CalL, of which one might be responsible for the introduction of the extra hydroxyl group attached to the backbone of the decalin moiety, at position C9 in the backbone, that allows for attachment of the linear moiety. One tailoring enzyme activity that is expected to be involved in biosynthesis of calbistrin is an acyltransferase for connecting the two polyketide synthase products, and which could be performed by the cluster acyltransferase calJ. The enzyme responsible for the biosynthesis of the linear moiety, probably a second PKS, has not been identified yet. The protein is Cytochrome P450 monooxygenase calL of Penicillium decumbens.